Here is a 396-residue protein sequence, read N- to C-terminus: Elongation factor Tu 1 (396 aa).

Residues 10-206 (KPHVNIGTIG…AVDEYIPTPE (197 aa)) enclose the tr-type G domain. The tract at residues 19-26 (GHVDHGKT) is G1. 19–26 (GHVDHGKT) provides a ligand contact to GTP. Mg(2+) is bound at residue threonine 26. The G2 stretch occupies residues 60–64 (GITIN). Positions 81 to 84 (DCPG) are G3. Residues 81-85 (DCPGH) and 136-139 (NKVD) each bind GTP. The tract at residues 136–139 (NKVD) is G4. A G5 region spans residues 174–176 (SAL).

This sequence belongs to the TRAFAC class translation factor GTPase superfamily. Classic translation factor GTPase family. EF-Tu/EF-1A subfamily. Monomer.

It is found in the cytoplasm. The catalysed reaction is GTP + H2O = GDP + phosphate + H(+). In terms of biological role, GTP hydrolase that promotes the GTP-dependent binding of aminoacyl-tRNA to the A-site of ribosomes during protein biosynthesis. This is Elongation factor Tu 1 from Hyphomonas neptunium (strain ATCC 15444).